Reading from the N-terminus, the 372-residue chain is Anhydro-N-acetylmuramic acid kinase (372 aa).

Residue 14-21 coordinates ATP; sequence GTSLDGVD.

The protein belongs to the anhydro-N-acetylmuramic acid kinase family.

It carries out the reaction 1,6-anhydro-N-acetyl-beta-muramate + ATP + H2O = N-acetyl-D-muramate 6-phosphate + ADP + H(+). Its pathway is amino-sugar metabolism; 1,6-anhydro-N-acetylmuramate degradation. The protein operates within cell wall biogenesis; peptidoglycan recycling. Functionally, catalyzes the specific phosphorylation of 1,6-anhydro-N-acetylmuramic acid (anhMurNAc) with the simultaneous cleavage of the 1,6-anhydro ring, generating MurNAc-6-P. Is required for the utilization of anhMurNAc either imported from the medium or derived from its own cell wall murein, and thus plays a role in cell wall recycling. The protein is Anhydro-N-acetylmuramic acid kinase of Photorhabdus laumondii subsp. laumondii (strain DSM 15139 / CIP 105565 / TT01) (Photorhabdus luminescens subsp. laumondii).